The sequence spans 262 residues: [LysW]-aminoadipate/[LysW]-glutamate kinase (262 aa).

Substrate is bound by residues 35–36 (GG), R62, and N167.

This sequence belongs to the acetylglutamate kinase family. LysZ subfamily.

The protein resides in the cytoplasm. The catalysed reaction is [amino-group carrier protein]-C-terminal-N-(1,4-dicarboxybutan-1-yl)-L-glutamine + ATP = [amino-group carrier protein]-C-terminal-N-(1-carboxy-5-phosphooxy-5-oxopentan-1-yl)-L-glutamine + ADP. The enzyme catalyses [amino-group carrier protein]-C-terminal-gamma-(L-glutamyl)-L-glutamate + ATP = [amino-group carrier protein]-C-terminal-gamma-(5-phospho-L-glutamyl)-L-glutamate + ADP. It functions in the pathway amino-acid biosynthesis; L-lysine biosynthesis via AAA pathway; L-lysine from L-alpha-aminoadipate (Thermus route): step 2/5. It participates in amino-acid biosynthesis; L-arginine biosynthesis. In terms of biological role, involved in both the arginine and lysine biosynthetic pathways. Phosphorylates the LysW-bound precursors glutamate (for arginine biosynthesis), respectively alpha-aminoadipate (for lysine biosynthesis). The chain is [LysW]-aminoadipate/[LysW]-glutamate kinase from Metallosphaera sedula (strain ATCC 51363 / DSM 5348 / JCM 9185 / NBRC 15509 / TH2).